Reading from the N-terminus, the 225-residue chain is Endo-1,4-beta-xylanase (225 aa).

The signal sequence occupies residues 1 to 31; it reads MVGFTPVALAALAATGALAFPAGNATELEKR. Pyrrolidone carboxylic acid is present on Gln-32. Positions 32-222 constitute a GH11 domain; that stretch reads QTTPNSEGWH…SSGYARITVA (191 aa). Glu-117 serves as the catalytic Nucleophile. Cys-141 and Cys-185 are oxidised to a cystine. Glu-209 serves as the catalytic Proton donor.

The catalysed reaction is Endohydrolysis of (1-&gt;4)-beta-D-xylosidic linkages in xylans.. It functions in the pathway glycan degradation; xylan degradation. The sequence is that of Endo-1,4-beta-xylanase (XYNA) from Thermomyces lanuginosus (Humicola lanuginosa).